We begin with the raw amino-acid sequence, 289 residues long: Formamidopyrimidine-DNA glycosylase (289 aa).

The active-site Schiff-base intermediate with DNA is proline 2. Residue glutamate 3 is the Proton donor of the active site. Lysine 61 serves as the catalytic Proton donor; for beta-elimination activity. DNA contacts are provided by histidine 96, arginine 115, and lysine 161. The segment at 247 to 281 (SAYGQENLPCPRCGAPIKREKFMNRSSFSCPRCQP) adopts an FPG-type zinc-finger fold. The active-site Proton donor; for delta-elimination activity is the arginine 271.

It belongs to the FPG family. In terms of assembly, monomer. Zn(2+) serves as cofactor.

The catalysed reaction is Hydrolysis of DNA containing ring-opened 7-methylguanine residues, releasing 2,6-diamino-4-hydroxy-5-(N-methyl)formamidopyrimidine.. The enzyme catalyses 2'-deoxyribonucleotide-(2'-deoxyribose 5'-phosphate)-2'-deoxyribonucleotide-DNA = a 3'-end 2'-deoxyribonucleotide-(2,3-dehydro-2,3-deoxyribose 5'-phosphate)-DNA + a 5'-end 5'-phospho-2'-deoxyribonucleoside-DNA + H(+). Its function is as follows. Involved in base excision repair of DNA damaged by oxidation or by mutagenic agents. Acts as a DNA glycosylase that recognizes and removes damaged bases. Has a preference for oxidized purines, such as 7,8-dihydro-8-oxoguanine (8-oxoG). Has AP (apurinic/apyrimidinic) lyase activity and introduces nicks in the DNA strand. Cleaves the DNA backbone by beta-delta elimination to generate a single-strand break at the site of the removed base with both 3'- and 5'-phosphates. This Rhodococcus erythropolis (strain PR4 / NBRC 100887) protein is Formamidopyrimidine-DNA glycosylase.